Consider the following 555-residue polypeptide: Connector enhancer of kinase suppressor of ras 3 (555 aa).

One can recognise an SAM domain in the interval 7–72 (WSPKQVVDWT…LEAVDLLCAL (66 aa)). One can recognise a CRIC domain in the interval 80–174 (NMKNLVLKLR…TTVQKDCFVA (95 aa)). The PDZ domain maps to 211–293 (EVHLPNIKPG…GVVLLLKKRP (83 aa)). Disordered regions lie at residues 309–334 (WKPP…DTSL), 347–390 (PPPP…FLDQ), and 517–537 (IPFQ…KSSS). A DUF1170 domain is found at 325-546 (SPESTMDTSL…STEPSLLVSW (222 aa)). Serine 381 and serine 383 each carry phosphoserine.

The protein belongs to the CNKSR family. As to quaternary structure, interacts with epithelial sodium channel ENaC. Interacts directly with SCNN1A (ENaC subunit alpha) and SCNN1B (ENaC subunit beta) C-terminal tails. Interacts with ENaC regulatory proteins NEDD4L, RAF1 and SGK1.

Its subcellular location is the cytoplasm. The protein resides in the apical cell membrane. In terms of biological role, involved in transepithelial sodium transport. Regulates aldosterone-induced and epithelial sodium channel (ENaC)-mediated sodium transport through regulation of ENaC cell surface expression. Acts as a scaffold protein coordinating the assembly of an ENaC-regulatory complex (ERC). This is Connector enhancer of kinase suppressor of ras 3 (CNKSR3) from Homo sapiens (Human).